Reading from the N-terminus, the 124-residue chain is uncharacterized protein (124 aa).

In terms of biological role, not required for the biogenesis of c-type cytochromes. This is an uncharacterized protein from Rhodobacter capsulatus (strain ATCC BAA-309 / NBRC 16581 / SB1003).